The primary structure comprises 536 residues: Phosphoenolpyruvate carboxykinase (ATP) (536 aa).

Substrate is bound by residues Arg61, Tyr195, and Lys201. ATP-binding positions include Lys201, His220, and 236-244; that span reads GLSGTGKTT. Positions 201 and 220 each coordinate Mn(2+). Position 257 (Asp257) interacts with Mn(2+). 3 residues coordinate ATP: Glu285, Arg322, and Thr447. Arg322 is a binding site for substrate.

The protein belongs to the phosphoenolpyruvate carboxykinase (ATP) family. Mn(2+) serves as cofactor.

Its subcellular location is the cytoplasm. The catalysed reaction is oxaloacetate + ATP = phosphoenolpyruvate + ADP + CO2. It functions in the pathway carbohydrate biosynthesis; gluconeogenesis. In terms of biological role, involved in the gluconeogenesis. Catalyzes the conversion of oxaloacetate (OAA) to phosphoenolpyruvate (PEP) through direct phosphoryl transfer between the nucleoside triphosphate and OAA. The chain is Phosphoenolpyruvate carboxykinase (ATP) from Rhizobium leguminosarum bv. trifolii (strain WSM2304).